A 210-amino-acid chain; its full sequence is NDR1/HIN1-like protein 12 (210 aa).

Residues 23–43 (GVIIGFIIIVLITIFLVWIIL) form a helical membrane-spanning segment. Asn-61 carries N-linked (GlcNAc...) asparagine glycosylation.

As to quaternary structure, may form oligomers or be a component of larger protein complex in plasma membranes. Expressed in leaves, stems and flowers, and, to a lower extent, in siliques and roots.

It is found in the cell membrane. In terms of biological role, may play a role in plant immunity. This Arabidopsis thaliana (Mouse-ear cress) protein is NDR1/HIN1-like protein 12.